We begin with the raw amino-acid sequence, 439 residues long: uncharacterized protein (439 aa).

The N-terminal stretch at 1-19 (MKKLLLTASIICLASAGLA) is a signal peptide.

This is an uncharacterized protein from Rickettsia felis (strain ATCC VR-1525 / URRWXCal2) (Rickettsia azadi).